The following is a 123-amino-acid chain: Large ribosomal subunit protein bL12 (123 aa).

The protein belongs to the bacterial ribosomal protein bL12 family. Homodimer. Part of the ribosomal stalk of the 50S ribosomal subunit. Forms a multimeric L10(L12)X complex, where L10 forms an elongated spine to which 2 to 4 L12 dimers bind in a sequential fashion. Binds GTP-bound translation factors.

In terms of biological role, forms part of the ribosomal stalk which helps the ribosome interact with GTP-bound translation factors. Is thus essential for accurate translation. The sequence is that of Large ribosomal subunit protein bL12 from Chlorobium phaeovibrioides (strain DSM 265 / 1930) (Prosthecochloris vibrioformis (strain DSM 265)).